Reading from the N-terminus, the 181-residue chain is MAAKVSSDPLVIGRVIGDVVDHFTSTVKMSVIYNSNNSIKHVYNGHELFPSAVTSTPRVEVHGGDMRSFFTLIMTDPDVPGPSDPYLREHLHWIVTDIPGTTDSSFGKEVVSYEMPRPNIGIHRFVFLLFKQKKRGQAMLSPPVVCRDGFNTRKFTQENELGLPVAAVFFNCQRETAARRR.

This sequence belongs to the phosphatidylethanolamine-binding protein family. As to quaternary structure, may form homodimers in solution.

The protein resides in the cytoplasm. Expression of CEN leads to a morphological switch between shoot growth and the development of flower structures (inflorescence). May form complexes with phosphorylated ligands by interfering with kinases and their effectors. This Antirrhinum majus (Garden snapdragon) protein is Protein CENTRORADIALIS (CEN).